Consider the following 471-residue polypeptide: Glutamate--tRNA ligase (471 aa).

The short motif at 9–19 is the 'HIGH' region element; the sequence is PSPTGYLHVGG. 4 residues coordinate Zn(2+): Cys-98, Cys-100, Cys-125, and His-127. Positions 237-241 match the 'KMSKS' region motif; that stretch reads KLSKR. An ATP-binding site is contributed by Lys-240.

The protein belongs to the class-I aminoacyl-tRNA synthetase family. Glutamate--tRNA ligase type 1 subfamily. As to quaternary structure, monomer. Requires Zn(2+) as cofactor.

It is found in the cytoplasm. It catalyses the reaction tRNA(Glu) + L-glutamate + ATP = L-glutamyl-tRNA(Glu) + AMP + diphosphate. In terms of biological role, catalyzes the attachment of glutamate to tRNA(Glu) in a two-step reaction: glutamate is first activated by ATP to form Glu-AMP and then transferred to the acceptor end of tRNA(Glu). The polypeptide is Glutamate--tRNA ligase (Cronobacter sakazakii (strain ATCC BAA-894) (Enterobacter sakazakii)).